A 263-amino-acid chain; its full sequence is Insertion sequence IS21-like putative ATP-binding protein (263 aa).

114-121 (GPSGTGKT) lines the ATP pocket.

This sequence belongs to the IS21/IS1162 putative ATP-binding protein family.

The polypeptide is Insertion sequence IS21-like putative ATP-binding protein (tnpB) (Bacteroides fragilis).